A 794-amino-acid chain; its full sequence is Zinc finger and BTB domain-containing protein 17 (794 aa).

A BTB domain is found at 1–104 (MDFPQHSQRV…VASFLQMQDI (104 aa)). The disordered stretch occupies residues 116–285 (EPSSTTGESA…QNLRSGTYGD (170 aa)). A compositionally biased stretch (basic and acidic residues) spans 132 to 142 (GGDKRAKDEKA). Positions 203 to 216 (SSMAAAEAEALSES) are enriched in low complexity. Residues 243 to 252 (VKEEGMHLDN) are compositionally biased toward basic and acidic residues. Over residues 254-263 (EPPEENEESA) the composition is skewed to acidic residues. The interaction with MYC stretch occupies residues 260–299 (EESAGTDSGQELGMEGQNLRSGTYGDRTESKAYGSIIHKC). C2H2-type zinc fingers lie at residues 297–319 (HKCE…IRIH), 325–347 (FSCR…EKTH), 353–375 (YGCE…KKRH), 381–403 (YRCG…QLVH), 409–431 (YQCD…LETH), 437–459 (HKCP…LKIH), 465–487 (LKCR…LRIH), 493–515 (YVCT…VRIH), 519–543 (KPCQ…VRQH), 549–571 (YVCE…IRHH), 577–599 (HKCS…IIIH), 605–628 (YLCD…KTVH), and 708–730 (YACD…VRIH). Residue lysine 388 forms a Glycyl lysine isopeptide (Lys-Gly) (interchain with G-Cter in ubiquitin) linkage. A Glycyl lysine isopeptide (Lys-Gly) (interchain with G-Cter in ubiquitin) cross-link involves residue lysine 472. The segment at 628–709 (HQGKAGIKIL…EDPNTHILYA (82 aa)) is interaction with MYC. Positions 628-794 (HQGKAGIKIL…TAPDCLPPAE (167 aa)) are interaction with HCFC1. Residues 769–794 (PRDGTEGQPTLAESPPTAPDCLPPAE) are disordered. The segment covering 784–794 (PTAPDCLPPAE) has biased composition (pro residues).

It belongs to the krueppel C2H2-type zinc-finger protein family. Homooligomerizes (via the BTB/POZ domain), multimerization is required for DNA binding. Binds to the C-terminal helix-loop-helix motif of MYC which inhibits ZBTB17 transactivation and growth arrest activities and renders it insoluble in the nucleus. Also interacts with HCFC1, MAGEA4 and TMPRSS11A. Interacts (via the C-terminal zinc fingers) with GFI1; the interaction results in the recruitment of MYC to the CDKN1A/p21 and CDKN1B promoters and repression of transcription. Interacts with TRAF2, interfering with the binding of UBC13 to TRAF2, and inhibiting TRAF2 E3 ligase activity. Interacts with BCL6; the interaction inhibits ZBTB17 transactivation activity on target genes involved in cell cycle arrest. Interacts with ZBTB49; this interaction blocks ZBTB17-mediated repression of RB1. Post-translationally, undergoes 'Lys-48'-linked polyubiquitination at Lys-388 and Lys-472 and subsequent proteasomal degradation in a TRAF2-dependent manner and upon TNFA stimulation. As to expression, found in all the embryonic and adult tissues examined.

Its subcellular location is the nucleus. Transcription factor that can function as an activator or repressor depending on its binding partners, and by targeting negative regulators of cell cycle progression. Has been shown to bind to the promoters of adenovirus major late protein and cyclin D1 and activate transcription. Required for early embryonic development during gastrulation. Plays a critical role in early lymphocyte development, where it is essential to prevent apoptosis in lymphoid precursors, allowing them to survive in response to IL7 and undergo proper lineage commitment. Represses RB1 transcription; this repression can be blocked by interaction with ZBTB49. This chain is Zinc finger and BTB domain-containing protein 17 (Zbtb17), found in Mus musculus (Mouse).